A 237-amino-acid polypeptide reads, in one-letter code: Probable GTP-binding protein EngB (237 aa).

An EngB-type G domain is found at 23–209 (AVPEVAFAGR…QAVIAGWLNL (187 aa)). GTP-binding positions include 31 to 38 (GRSNAGKS), 58 to 62 (GRTQH), 82 to 85 (DLPG), 149 to 152 (TKAD), and 187 to 190 (LFSS). Ser38 and Thr60 together coordinate Mg(2+). Residues 214–237 (KAEREPAAANSVPPAVPPASDPAA) form a disordered region. Residues 227-237 (PAVPPASDPAA) show a composition bias toward pro residues.

This sequence belongs to the TRAFAC class TrmE-Era-EngA-EngB-Septin-like GTPase superfamily. EngB GTPase family. The cofactor is Mg(2+).

In terms of biological role, necessary for normal cell division and for the maintenance of normal septation. This is Probable GTP-binding protein EngB from Cupriavidus taiwanensis (strain DSM 17343 / BCRC 17206 / CCUG 44338 / CIP 107171 / LMG 19424 / R1) (Ralstonia taiwanensis (strain LMG 19424)).